A 308-amino-acid chain; its full sequence is Oxygen-dependent coproporphyrinogen-III oxidase (308 aa).

Ser100 serves as a coordination point for substrate. Residues His104 and His114 each coordinate a divalent metal cation. His114 serves as the catalytic Proton donor. 116 to 118 (NFR) provides a ligand contact to substrate. The a divalent metal cation site is built by His153 and His183. Positions 248–283 (YVEFNLVFDRGTIFGLQSGGRTESILSSMPPMATWK) are important for dimerization. 266 to 268 (GGR) is a substrate binding site.

It belongs to the aerobic coproporphyrinogen-III oxidase family. As to quaternary structure, homodimer. A divalent metal cation serves as cofactor.

The protein resides in the cytoplasm. The catalysed reaction is coproporphyrinogen III + O2 + 2 H(+) = protoporphyrinogen IX + 2 CO2 + 2 H2O. It functions in the pathway porphyrin-containing compound metabolism; protoporphyrin-IX biosynthesis; protoporphyrinogen-IX from coproporphyrinogen-III (O2 route): step 1/1. Functionally, involved in the heme biosynthesis. Catalyzes the aerobic oxidative decarboxylation of propionate groups of rings A and B of coproporphyrinogen-III to yield the vinyl groups in protoporphyrinogen-IX. The polypeptide is Oxygen-dependent coproporphyrinogen-III oxidase (Francisella tularensis subsp. holarctica (strain LVS)).